Reading from the N-terminus, the 183-residue chain is A-type ATP synthase subunit E (183 aa).

The protein belongs to the V-ATPase E subunit family. As to quaternary structure, has multiple subunits with at least A(3), B(3), C, D, E, F, H, I and proteolipid K(x).

It is found in the cell membrane. Component of the A-type ATP synthase that produces ATP from ADP in the presence of a proton gradient across the membrane. The protein is A-type ATP synthase subunit E of Methanosarcina acetivorans (strain ATCC 35395 / DSM 2834 / JCM 12185 / C2A).